The chain runs to 116 residues: Large ribosomal subunit protein uL18 (116 aa).

It belongs to the universal ribosomal protein uL18 family. In terms of assembly, part of the 50S ribosomal subunit; part of the 5S rRNA/L5/L18/L25 subcomplex. Contacts the 5S and 23S rRNAs.

Functionally, this is one of the proteins that bind and probably mediate the attachment of the 5S RNA into the large ribosomal subunit, where it forms part of the central protuberance. The polypeptide is Large ribosomal subunit protein uL18 (Shewanella sp. (strain ANA-3)).